The sequence spans 389 residues: Acetoin utilization protein AcuC (389 aa).

It belongs to the histone deacetylase family.

The protein operates within ketone degradation; acetoin degradation. Functionally, role in growth on acetoin or butanediol. Involved in the breakdown of these compounds used as a carbon source. The protein is Acetoin utilization protein AcuC (acuC) of Staphylococcus aureus (strain COL).